We begin with the raw amino-acid sequence, 267 residues long: Phosphatidylserine decarboxylase proenzyme (267 aa).

Residues D78, H132, and S236 each act as charge relay system; for autoendoproteolytic cleavage activity in the active site. The active-site Schiff-base intermediate with substrate; via pyruvic acid; for decarboxylase activity is S236. S236 bears the Pyruvic acid (Ser); by autocatalysis mark.

It belongs to the phosphatidylserine decarboxylase family. PSD-B subfamily. Prokaryotic type I sub-subfamily. As to quaternary structure, heterodimer of a large membrane-associated beta subunit and a small pyruvoyl-containing alpha subunit. Requires pyruvate as cofactor. Post-translationally, is synthesized initially as an inactive proenzyme. Formation of the active enzyme involves a self-maturation process in which the active site pyruvoyl group is generated from an internal serine residue via an autocatalytic post-translational modification. Two non-identical subunits are generated from the proenzyme in this reaction, and the pyruvate is formed at the N-terminus of the alpha chain, which is derived from the carboxyl end of the proenzyme. The autoendoproteolytic cleavage occurs by a canonical serine protease mechanism, in which the side chain hydroxyl group of the serine supplies its oxygen atom to form the C-terminus of the beta chain, while the remainder of the serine residue undergoes an oxidative deamination to produce ammonia and the pyruvoyl prosthetic group on the alpha chain. During this reaction, the Ser that is part of the protease active site of the proenzyme becomes the pyruvoyl prosthetic group, which constitutes an essential element of the active site of the mature decarboxylase.

It is found in the cell membrane. The enzyme catalyses a 1,2-diacyl-sn-glycero-3-phospho-L-serine + H(+) = a 1,2-diacyl-sn-glycero-3-phosphoethanolamine + CO2. It participates in phospholipid metabolism; phosphatidylethanolamine biosynthesis; phosphatidylethanolamine from CDP-diacylglycerol: step 2/2. In terms of biological role, catalyzes the formation of phosphatidylethanolamine (PtdEtn) from phosphatidylserine (PtdSer). This chain is Phosphatidylserine decarboxylase proenzyme, found in Helicobacter pylori (strain J99 / ATCC 700824) (Campylobacter pylori J99).